Consider the following 412-residue polypeptide: Acyl-[acyl-carrier-protein] hydrolase FATB2, chloroplastic (412 aa).

Composition is skewed to low complexity over residues 1-13 (TAASSAFFPVPSA) and 56-66 (GSSVGLKSGGL). The transit peptide at 1-46 (TAASSAFFPVPSADTSSRPGKLGNGPSSFSPLKPKSIPNGGLQVKA) directs the protein to the chloroplast. The interval 1-78 (TAASSAFFPV…HDDAPSAPPP (78 aa)) is disordered. Residues Asn-311, His-313, and Cys-348 contribute to the active site.

It belongs to the acyl-ACP thioesterase family.

It localises to the plastid. It is found in the chloroplast. The enzyme catalyses tetradecanoyl-[ACP] + H2O = tetradecanoate + holo-[ACP] + H(+). It catalyses the reaction hexadecanoyl-[ACP] + H2O = hexadecanoate + holo-[ACP] + H(+). Functionally, plays an essential role in chain termination during de novo fatty acid synthesis. Possesses thioesterase activity for medium chain acyl-ACPs. Substrate preference is 14:0 &gt; 16:0 &gt; 16:1. The sequence is that of Acyl-[acyl-carrier-protein] hydrolase FATB2, chloroplastic from Cuphea viscosissima (Blue waxweed).